The following is a 377-amino-acid chain: E3 ubiquitin-protein ligase rififylin (377 aa).

The FYVE-type zinc-finger motif lies at 55-107 (TGSEPSCKACGVHFASTTRKQTCLDCKKNFCMTCSSQEGNGPRLCLLCLRFRA). The SAP 1 domain maps to 115–134 (LMKMKVKDLRDYLSLHDIST). The segment at 176 to 249 (LTQPQTSTVP…SVDSEDSFVP (74 aa)) is disordered. Residues 190 to 212 (GLPSSPAQVTSVPLAQDQETQQA) show a composition bias toward polar residues. The span at 235 to 245 (EDETQSVDSED) shows a compositional bias: acidic residues. 4 positions are modified to phosphoserine: Ser240, Ser243, Ser246, and Ser254. Positions 264–278 (IEGLTVRQLKEILAR) constitute an SAP 2 domain. The RING-type zinc finger occupies 330 to 365 (CKICMDSPIDCVLLECGHMVTCTKCGKRMNECPICR).

As to quaternary structure, interacts with CASP8 and CASP10. Interacts with RIPK1 (via protein kinase domain); involved in RIPK1 ubiquitination. Interacts with PRR5L. Interacts (via RING-type zinc finger) with p53/TP53; involved in p53/TP53 ubiquitination. Interacts (via RING-type zinc finger) with MDM2; the interaction stabilizes MDM2. Post-translationally, autoubiquitinated. Palmitoylated. In terms of processing, undergoes caspase-mediated cleavage upon death-receptor activation, by TNFSF10 for instance. May be mediated by the caspases CASP8 and CASP10 in a negative feedback loop. In terms of tissue distribution, ubiquitous. Detected in heart, brain, spleen, lung, liver, skeletal muscle, kidney, testis, thymus, whole embryo and embryonic stem cells.

Its subcellular location is the cytoplasm. It is found in the cytosol. It localises to the cell membrane. The protein localises to the recycling endosome membrane. It catalyses the reaction S-ubiquitinyl-[E2 ubiquitin-conjugating enzyme]-L-cysteine + [acceptor protein]-L-lysine = [E2 ubiquitin-conjugating enzyme]-L-cysteine + N(6)-ubiquitinyl-[acceptor protein]-L-lysine.. The protein operates within protein modification; protein ubiquitination. Its function is as follows. E3 ubiquitin-protein ligase that regulates several biological processes through the ubiquitin-mediated proteasomal degradation of various target proteins. Mediates 'Lys-48'-linked polyubiquitination of PRR5L and its subsequent proteasomal degradation thereby indirectly regulating cell migration through the mTORC2 complex. Also ubiquitinates the caspases CASP8 and CASP10, promoting their proteasomal degradation, to negatively regulate apoptosis downstream of death domain receptors. Also negatively regulates the tumor necrosis factor-mediated signaling pathway through targeting of RIPK1 to ubiquitin-mediated proteasomal degradation. Negatively regulates p53/TP53 through its direct ubiquitination and targeting to proteasomal degradation. Indirectly, may also negatively regulate p53/TP53 through ubiquitination and degradation of SFN. May also play a role in endocytic recycling. This is E3 ubiquitin-protein ligase rififylin from Mus musculus (Mouse).